The primary structure comprises 245 residues: Demethylmenaquinone methyltransferase (245 aa).

S-adenosyl-L-methionine-binding positions include Thr70, Asp90, and 118-119 (DC).

It belongs to the class I-like SAM-binding methyltransferase superfamily. MenG/UbiE family.

It catalyses the reaction a 2-demethylmenaquinol + S-adenosyl-L-methionine = a menaquinol + S-adenosyl-L-homocysteine + H(+). Its pathway is quinol/quinone metabolism; menaquinone biosynthesis; menaquinol from 1,4-dihydroxy-2-naphthoate: step 2/2. Methyltransferase required for the conversion of demethylmenaquinol (DMKH2) to menaquinol (MKH2). In Bacteroides fragilis (strain ATCC 25285 / DSM 2151 / CCUG 4856 / JCM 11019 / LMG 10263 / NCTC 9343 / Onslow / VPI 2553 / EN-2), this protein is Demethylmenaquinone methyltransferase.